The primary structure comprises 120 residues: Large ribosomal subunit protein uL22 (120 aa).

It belongs to the universal ribosomal protein uL22 family. Part of the 50S ribosomal subunit.

In terms of biological role, this protein binds specifically to 23S rRNA; its binding is stimulated by other ribosomal proteins, e.g. L4, L17, and L20. It is important during the early stages of 50S assembly. It makes multiple contacts with different domains of the 23S rRNA in the assembled 50S subunit and ribosome. Its function is as follows. The globular domain of the protein is located near the polypeptide exit tunnel on the outside of the subunit, while an extended beta-hairpin is found that lines the wall of the exit tunnel in the center of the 70S ribosome. This chain is Large ribosomal subunit protein uL22, found in Corynebacterium aurimucosum (strain ATCC 700975 / DSM 44827 / CIP 107346 / CN-1) (Corynebacterium nigricans).